The following is an 845-amino-acid chain: Protein kintoun (845 aa).

Basic and acidic residues predominate over residues 362–382; that stretch reads SKEQAQMHETLRHFSREDSGV. Disordered regions lie at residues 362–420, 575–691, and 773–845; these read SKEQ…PVRH, QALK…SMSD, and AQHR…EMDD. Residue Ser380 is modified to Phosphoserine. Over residues 391-400 the composition is skewed to acidic residues; it reads PVEEDPDGEL. Residues 584–593 are compositionally biased toward basic and acidic residues; it reads GTKEEEKENQ. A compositionally biased stretch (basic residues) spans 611-622; the sequence is KPGKKQRKRNKK. Polar residues predominate over residues 640–671; the sequence is LTKNSELQPKSTFNLPQRKQRSYSECNDSTGG. Ser779 is subject to Phosphoserine. The span at 794-804 shows a compositional bias: polar residues; it reads LKQQENQSRNC.

It belongs to the PIH1 family. Kintoun subfamily. Interacts with Pp1alpha-96A, Pp1-87B, Pp1-13C and flw.

The protein resides in the cytoplasm. In terms of biological role, required for cytoplasmic pre-assembly of axonemal dyneins, thereby playing a central role in motility in cilia and flagella. Involved in pre-assembly of dynein arm complexes in the cytoplasm before intraflagellar transport loads them for the ciliary compartment. This chain is Protein kintoun, found in Drosophila erecta (Fruit fly).